Here is a 3462-residue protein sequence, read N- to C-terminus: Extracellular matrix-binding protein EbhA (3462 aa).

Residues 1–19 (MVQQSTTVAEAQGNEQKAN) show a composition bias toward polar residues. The disordered stretch occupies residues 1-21 (MVQQSTTVAEAQGNEQKANNV). FIVAR domains follow at residues 24–82 (AMDK…INQA), 150–208 (AMGN…VEQA), 276–334 (AMTQ…ITAA), 402–460 (AMTQ…IQQA), 528–586 (AMTN…VEQA), 654–712 (AMTQ…VAQA), 780–838 (AMGT…VTQA), 906–964 (AMSN…ITRA), 1032–1093 (AMDQ…ITNE), 1158–1216 (AMEL…VNGA), 1284–1342 (AMGN…VEQA), 1410–1467 (AMHG…INQA), 1535–1593 (LMDA…VSSA), 1661–1719 (AMEA…VEQL), 1787–1845 (AMQA…VEQL), 1913–1971 (AMET…VDQV), 2039–2093 (SMDQ…VDQA), 2161–2220 (AMDQ…VIKL), and 2415–2471 (AMET…INGA). Residues 3267 to 3289 (VIKNAIGVVGISGLLASFWFFIA) traverse the membrane as a helical segment. Positions 3365–3462 (RRKEDEEDVE…KKKKAKKNKK (98 aa)) are disordered. Composition is skewed to basic and acidic residues over residues 3380–3390 (TDEKVLKDNEH) and 3429–3439 (QKDNQSKDKKS). The span at 3444–3462 (TSKKVAAKKKKKKAKKNKK) shows a compositional bias: basic residues.

The protein localises to the cell membrane. This is Extracellular matrix-binding protein EbhA (ebhA) from Staphylococcus aureus (strain Newman).